The sequence spans 382 residues: Cell division protein DivIB (382 aa).

Residues Met-1–Ser-103 are Cytoplasmic-facing. Basic and acidic residues-rich tracts occupy residues Glu-36 to Ala-49 and Val-60 to Ser-70. Positions Glu-36–Glu-92 are disordered. Residues Leu-104 to Tyr-124 traverse the membrane as a helical segment. One can recognise a POTRA domain in the interval Ser-125 to Phe-196. The Extracellular segment spans residues Ser-125–Gly-382. Residues Gln-322–Gly-382 are disordered. Residues Ala-338–Gln-352 show a composition bias toward basic and acidic residues.

It belongs to the FtsQ/DivIB family. DivIB subfamily.

The protein localises to the cell membrane. In terms of biological role, cell division protein that may be involved in stabilizing or promoting the assembly of the division complex. The chain is Cell division protein DivIB from Streptococcus pyogenes serotype M2 (strain MGAS10270).